Reading from the N-terminus, the 152-residue chain is Transcriptional regulator MraZ (152 aa).

2 SpoVT-AbrB domains span residues 5–52 and 81–124; these read ATLV…PLPE and ASEC…DETT.

It belongs to the MraZ family. Dodecamer.

The protein localises to the cytoplasm. The protein resides in the nucleoid. Negatively regulates its own expression and that of the subsequent genes in the proximal part of the division and cell wall (dcw) gene cluster. Acts by binding directly to DNA. May also regulate the expression of genes outside the dcw cluster. This Escherichia coli (strain K12) protein is Transcriptional regulator MraZ.